The primary structure comprises 307 residues: 3-methyl-2-oxobutanoate hydroxymethyltransferase (307 aa).

Mg(2+) contacts are provided by aspartate 61 and aspartate 100. 3-methyl-2-oxobutanoate-binding positions include 61–62 (DS), aspartate 100, and lysine 130. Glutamate 132 serves as a coordination point for Mg(2+). Glutamate 199 serves as the catalytic Proton acceptor.

It belongs to the PanB family. As to quaternary structure, homodecamer; pentamer of dimers. The cofactor is Mg(2+).

It localises to the cytoplasm. It catalyses the reaction 3-methyl-2-oxobutanoate + (6R)-5,10-methylene-5,6,7,8-tetrahydrofolate + H2O = 2-dehydropantoate + (6S)-5,6,7,8-tetrahydrofolate. It participates in cofactor biosynthesis; (R)-pantothenate biosynthesis; (R)-pantoate from 3-methyl-2-oxobutanoate: step 1/2. Catalyzes the reversible reaction in which hydroxymethyl group from 5,10-methylenetetrahydrofolate is transferred onto alpha-ketoisovalerate to form ketopantoate. The chain is 3-methyl-2-oxobutanoate hydroxymethyltransferase from Nitratidesulfovibrio vulgaris (strain ATCC 29579 / DSM 644 / CCUG 34227 / NCIMB 8303 / VKM B-1760 / Hildenborough) (Desulfovibrio vulgaris).